We begin with the raw amino-acid sequence, 151 residues long: Large ribosomal subunit protein bL9 (151 aa).

This sequence belongs to the bacterial ribosomal protein bL9 family.

Its function is as follows. Binds to the 23S rRNA. In Lactobacillus acidophilus (strain ATCC 700396 / NCK56 / N2 / NCFM), this protein is Large ribosomal subunit protein bL9.